A 499-amino-acid polypeptide reads, in one-letter code: Gypsy retrotransposon integrase-like protein 1 (499 aa).

One can recognise an Integrase catalytic domain in the interval 113 to 270 (KVENPWSIVT…TPYFQMFNRN (158 aa)).

This is Gypsy retrotransposon integrase-like protein 1 (GIN1) from Bos taurus (Bovine).